The following is a 139-amino-acid chain: Putative nickel-responsive regulator (139 aa).

4 residues coordinate Ni(2+): histidine 79, histidine 90, histidine 92, and cysteine 98.

This sequence belongs to the transcriptional regulatory CopG/NikR family. The cofactor is Ni(2+).

Functionally, transcriptional regulator. This chain is Putative nickel-responsive regulator, found in Geotalea uraniireducens (strain Rf4) (Geobacter uraniireducens).